We begin with the raw amino-acid sequence, 496 residues long: Sugar transporter ERD6 (496 aa).

The next 6 membrane-spanning stretches (helical) occupy residues 58–78, 94–114, 128–148, 156–176, 183–203, and 211–231; these read VFLS…GVGF, VAEY…GAVF, MLFC…AQNA, LLLG…IAEI, GSFV…FFII, and LLTV…FFIP. At serine 256 the chain carries Phosphoserine. A run of 6 helical transmembrane segments spans residues 292 to 312, 329 to 349, 364 to 384, 394 to 414, 430 to 450, and 456 to 476; these read YPLI…SSGV, IGTS…TVLV, AMGL…FGIL, IGVL…PWII, LVTV…NFML, and GMFL…YFLV.

This sequence belongs to the major facilitator superfamily. Sugar transporter (TC 2.A.1.1) family. Expressed in both shoots and roots. In roots, expressed in epidermal cells and especially strongly in cortex cells. In flowers, expressed in sepals.

It localises to the membrane. Its function is as follows. Sugar transporter. This Arabidopsis thaliana (Mouse-ear cress) protein is Sugar transporter ERD6 (ERD6).